A 256-amino-acid chain; its full sequence is MFNLILWPLFLLTSVAIPLQLTLEVVYLTSSVDFSKASAAKTATSLGQSPVVITIYKSLLKYWSLYEFIHFIYLYTPIDAFLNFLPFTSLLMSFGSICLTRELVYDFIAFMESQNKLTGFLNKITEPNFNSYLLFSSIYNIWFADDTNDKFLFGKLTQILISVTKRYEFPRTFYLAKVSDFLQNLILTRLRPFVTEQPQGDKNRYQNGDRESTKNGAAYQKSSQQSSSFEQNFTSTEFPNDYDFMEDILDETTELD.

A signal peptide spans 1–16 (MFNLILWPLFLLTSVA). Topologically, residues 17–67 (IPLQLTLEVVYLTSSVDFSKASAAKTATSLGQSPVVITIYKSLLKYWSLYE) are lumenal. A helical membrane pass occupies residues 68–88 (FIHFIYLYTPIDAFLNFLPFT). The Cytoplasmic portion of the chain corresponds to 89 to 256 (SLLMSFGSIC…DILDETTELD (168 aa)). A disordered region spans residues 197–243 (QPQGDKNRYQNGDRESTKNGAAYQKSSQQSSSFEQNFTSTEFPNDYD). Positions 199–213 (QGDKNRYQNGDREST) are enriched in basic and acidic residues. Positions 222–238 (SSQQSSSFEQNFTSTEF) are enriched in low complexity. Residues 242 to 245 (YDFM) carry the ATG8-binding motif.

As to quaternary structure, interacts with ATG8 and ATG11.

Its subcellular location is the endoplasmic reticulum membrane. It is found in the preautophagosomal structure membrane. Acts as a receptor for reticulophagy. Directs autophagic sequestration of folded tubules/sheets derived from the cortical endoplasmic reticulum (cER) and the cytoplasmic endoplasmic reticulum (cytoER) into autophagosomes. Is not required for the cytoplasm-to-vacuole targeting pathway, mitophagy, pexophagy, and non-selective autophagy. The chain is Autophagy-related protein 40 from Saccharomyces cerevisiae (strain ATCC 204508 / S288c) (Baker's yeast).